The sequence spans 337 residues: Pseudouridine-5'-phosphate glycosidase (337 aa).

The Proton donor role is filled by Glu-26. Substrate is bound by residues Lys-87 and Val-107. Mn(2+) is bound at residue Asp-139. A substrate-binding site is contributed by 141–143; the sequence is SAD. Lys-160 acts as the Nucleophile in catalysis. Residues 306–325 show a composition bias toward low complexity; the sequence is SSGPQAGAGAPGAEPGPARR. The interval 306-337 is disordered; the sequence is SSGPQAGAGAPGAEPGPARRTSPARAPSGEGW.

The protein belongs to the pseudouridine-5'-phosphate glycosidase family. Homotrimer. It depends on Mn(2+) as a cofactor.

It carries out the reaction D-ribose 5-phosphate + uracil = psi-UMP + H2O. Catalyzes the reversible cleavage of pseudouridine 5'-phosphate (PsiMP) to ribose 5-phosphate and uracil. Functions biologically in the cleavage direction, as part of a pseudouridine degradation pathway. The polypeptide is Pseudouridine-5'-phosphate glycosidase (Methylobacterium nodulans (strain LMG 21967 / CNCM I-2342 / ORS 2060)).